Consider the following 970-residue polypeptide: Translation initiation factor IF-2 (970 aa).

2 disordered regions span residues 54–270 (KILA…TATQ) and 328–348 (DKRR…KSLS). Residues 87–96 (QEAQPVEAQP) are compositionally biased toward low complexity. Residues 98–112 (YEEQPSYEEQPSYEE) show a composition bias toward polar residues. Residues 121–149 (EVAAEAAPEPVEEPASSPEGGAPAGGAEP) show a composition bias toward low complexity. Pro residues-rich tracts occupy residues 150 to 160 (QPAPEAPPPSA) and 168 to 182 (PSAP…PAPS). The span at 183–253 (VPAGAQPPGA…PHGPGAQPGQ (71 aa)) shows a compositional bias: low complexity. The tr-type G domain maps to 469–638 (IRPPVVTVMG…ALQSEVLELK (170 aa)). Positions 478–485 (GHVDHGKT) are G1. A GTP-binding site is contributed by 478-485 (GHVDHGKT). The segment at 503-507 (GITQH) is G2. Positions 524–527 (DTPG) are G3. GTP is bound by residues 524–528 (DTPGH) and 578–581 (NKID). A G4 region spans residues 578–581 (NKID). Positions 614–616 (SAR) are G5.

The protein belongs to the TRAFAC class translation factor GTPase superfamily. Classic translation factor GTPase family. IF-2 subfamily.

Its subcellular location is the cytoplasm. Its function is as follows. One of the essential components for the initiation of protein synthesis. Protects formylmethionyl-tRNA from spontaneous hydrolysis and promotes its binding to the 30S ribosomal subunits. Also involved in the hydrolysis of GTP during the formation of the 70S ribosomal complex. The sequence is that of Translation initiation factor IF-2 from Anaeromyxobacter sp. (strain Fw109-5).